The following is a 283-amino-acid chain: Acyl-coenzyme A diphosphatase FITM2 (283 aa).

Residues 1-11 (MSTRRSSTRAD) show a composition bias toward low complexity. Residues 1-21 (MSTRRSSTRADSTTKRPASPN) are disordered. The Cytoplasmic portion of the chain corresponds to 1–39 (MSTRRSSTRADSTTKRPASPNSTPNAALGIFVAIARQIL). Residues 40–60 (FIDARKVALFYLAFVTVLSFI) form a helical membrane-spanning segment. At 61–81 (ESRIELDSTYYLVQKHSVLNQ) the chain is on the lumenal side. Residues 82–102 (YGVKMGWFWTLVIVGPFIWFS) traverse the membrane as a helical segment. The Cytoplasmic portion of the chain corresponds to 103 to 120 (SKAHNRRDRDQPIVDVCR). A helical membrane pass occupies residues 121–141 (LGVGTACWYFSVQFFHKVLAL). Residues 142-168 (TSMCDKGRTLTRAQCSEKEGVWTPGYD) lie on the Lumenal side of the membrane. Residues 169–189 (ISGHCFLMIYSILIITEEAIA) form a helical membrane-spanning segment. Histidine 172 is an active-site residue. At 190–219 (YRHYQQVTDAVHQMDGDREEHDRLTRCIQY) the chain is on the cytoplasmic side. The next 2 membrane-spanning stretches (helical) occupy residues 220–240 (FFVA…ISVL) and 241–261 (YYHI…CWFV). Histidine 243 is an active-site residue. Residues 262-283 (TYRMLYPAGFLASPIRRTVGRK) are Cytoplasmic-facing.

It belongs to the FIT family. FIT2 subfamily.

It localises to the endoplasmic reticulum membrane. It catalyses the reaction an acyl-CoA + H2O = an acyl-4'-phosphopantetheine + adenosine 3',5'-bisphosphate + 2 H(+). Functionally, fatty acyl-coenzyme A (CoA) diphosphatase that hydrolyzes fatty acyl-CoA to yield acyl-4'-phosphopantetheine and adenosine 3',5'-bisphosphate. Preferentially hydrolyzes unsaturated long-chain acyl-CoA substrates in the endoplasmic reticulum (ER) lumen. This catalytic activity is required for maintaining ER structure and for lipid droplets (LDs) biogenesis, which are lipid storage organelles involved in maintaining lipid and energy homeostasis. May directly bind to diacylglycerol (DAGs) and triacylglycerol, which is also important for LD biogenesis. May support directional budding of nacent LDs from the ER into the cytosol by reducing DAG levels at sites of LD formation. May play a role in the regulation of cell morphology, ER morphology and cytoskeletal organization. The sequence is that of Acyl-coenzyme A diphosphatase FITM2 from Caenorhabditis elegans.